The chain runs to 689 residues: Elongation factor G (689 aa).

One can recognise a tr-type G domain in the interval 9–283 (AKFRNIGIMA…AIVEFMPSPL (275 aa)). GTP contacts are provided by residues 18–25 (AHIDAGKT), 82–86 (DTPGH), and 136–139 (NKMD).

Belongs to the TRAFAC class translation factor GTPase superfamily. Classic translation factor GTPase family. EF-G/EF-2 subfamily.

Its subcellular location is the cytoplasm. Functionally, catalyzes the GTP-dependent ribosomal translocation step during translation elongation. During this step, the ribosome changes from the pre-translocational (PRE) to the post-translocational (POST) state as the newly formed A-site-bound peptidyl-tRNA and P-site-bound deacylated tRNA move to the P and E sites, respectively. Catalyzes the coordinated movement of the two tRNA molecules, the mRNA and conformational changes in the ribosome. The sequence is that of Elongation factor G from Clostridium botulinum (strain Kyoto / Type A2).